The following is a 372-amino-acid chain: Aminomethyltransferase (372 aa).

Belongs to the GcvT family. As to quaternary structure, the glycine cleavage system is composed of four proteins: P, T, L and H.

The enzyme catalyses N(6)-[(R)-S(8)-aminomethyldihydrolipoyl]-L-lysyl-[protein] + (6S)-5,6,7,8-tetrahydrofolate = N(6)-[(R)-dihydrolipoyl]-L-lysyl-[protein] + (6R)-5,10-methylene-5,6,7,8-tetrahydrofolate + NH4(+). In terms of biological role, the glycine cleavage system catalyzes the degradation of glycine. The protein is Aminomethyltransferase of Prochlorococcus marinus (strain NATL1A).